The chain runs to 421 residues: D-amino acid dehydrogenase (421 aa).

FAD is bound at residue 4–18 (VLVLGSGVVGLTSAW).

This sequence belongs to the DadA oxidoreductase family. It depends on FAD as a cofactor.

It catalyses the reaction a D-alpha-amino acid + A + H2O = a 2-oxocarboxylate + AH2 + NH4(+). Functionally, oxidative deamination of D-amino acids. The protein is D-amino acid dehydrogenase of Vibrio cholerae serotype O1 (strain ATCC 39315 / El Tor Inaba N16961).